Reading from the N-terminus, the 101-residue chain is MAKKSAIETNERRRKLSQSKAAKRASLKAIVNDKTLPIEERFAATLKLAQMPRNSAKIRVRNRCEVTGRPRAFYRKLKMSRVALRELGSQGLVPGLVKSSW.

A compositionally biased stretch (basic and acidic residues) spans 1–11; it reads MAKKSAIETNE. Residues 1–24 form a disordered region; that stretch reads MAKKSAIETNERRRKLSQSKAAKR. Residues 12–24 are compositionally biased toward basic residues; that stretch reads RRRKLSQSKAAKR.

Belongs to the universal ribosomal protein uS14 family. As to quaternary structure, part of the 30S ribosomal subunit. Contacts proteins S3 and S10.

Binds 16S rRNA, required for the assembly of 30S particles and may also be responsible for determining the conformation of the 16S rRNA at the A site. The chain is Small ribosomal subunit protein uS14 from Azorhizobium caulinodans (strain ATCC 43989 / DSM 5975 / JCM 20966 / LMG 6465 / NBRC 14845 / NCIMB 13405 / ORS 571).